Consider the following 197-residue polypeptide: Transmembrane 4 L6 family member 5 (197 aa).

The Cytoplasmic portion of the chain corresponds to 1 to 9 (MCTGKCARC). Residues 10–30 (VGLSLITLCLVCIVANALLLV) form a helical membrane-spanning segment. Topologically, residues 31–46 (PNGETSWTNTNHLSLQ) are extracellular. The helical transmembrane segment at 47 to 67 (VWLMGGFIGGGLMVLCPGIAA) threads the bilayer. Residues 68-90 (VRAGGKGCCGAGCCGNRCRMLRS) lie on the Cytoplasmic side of the membrane. The helical transmembrane segment at 91 to 111 (VFSSAFGVLGAIYCLSVSGAG) threads the bilayer. Positions 91 to 197 (VFSSAFGVLG…DCRKKQDTPH (107 aa)) are interaction with MTOR and CASTOR1. The Extracellular segment spans residues 112–157 (LRNGPRCLMNGEWGYHFEDTAGAYLLNRTLWDRCEAPPRVVPWNVT). 124 to 129 (WGYHFE) provides a ligand contact to L-arginine. 2 N-linked (GlcNAc...) asparagine glycosylation sites follow: Asn138 and Asn155. The chain crosses the membrane as a helical span at residues 158–178 (LFSLLVAASCLEIVLCGIQLV). Topologically, residues 179–197 (NATIGVFCGDCRKKQDTPH) are cytoplasmic.

The protein belongs to the L6 tetraspanin family. In terms of assembly, interacts with MTOR; the interaction is positively regulated by arginine and is negatively regulated by leucine. Interacts with SLC38A9. Interacts with SLC7A1; the interaction is negatively regulated by arginine. Interacts with CASTOR1; the interaction is positively regulated by leucine and is negatively regulated by arginine. As to expression, intestine. Overexpressed in pancreatic cancers.

It localises to the lysosome membrane. Its subcellular location is the cell membrane. Its function is as follows. Acts as a lysosomal membrane arginine sensor. Forms a complex with MTOR and SLC38A9 on lysosomal membranes in an arginine-regulated manner, leading to arginine efflux which enables the activation of mTORC1 which subsequently leads to RPS6KB1 and EIF4EBP1 phosphorylations. Facilitates cell cycle G1/S phase progression and the translocation of the CDK4-CCND1 complex into the nucleus. CDKN1B and RHOA/ROCK signaling activity are involved in TM4SF5-mediated acceleration of G1/S phase progression. The chain is Transmembrane 4 L6 family member 5 (TM4SF5) from Homo sapiens (Human).